The chain runs to 224 residues: Uracil-DNA glycosylase (224 aa).

Aspartate 64 acts as the Proton acceptor in catalysis.

This sequence belongs to the uracil-DNA glycosylase (UDG) superfamily. UNG family.

Its subcellular location is the cytoplasm. It carries out the reaction Hydrolyzes single-stranded DNA or mismatched double-stranded DNA and polynucleotides, releasing free uracil.. Excises uracil residues from the DNA which can arise as a result of misincorporation of dUMP residues by DNA polymerase or due to deamination of cytosine. This chain is Uracil-DNA glycosylase, found in Geobacillus sp. (strain WCH70).